We begin with the raw amino-acid sequence, 198 residues long: Sorcin (198 aa).

4 EF-hand domains span residues 29–64, 70–103, 100–135, and 134–169; these read GQTQ…SGIA, FNLE…AVLN, AVLN…MGFR, and FRLS…LRAL. Residues Asp83, Asp85, Ser87, Thr89, Glu94, Asp113, Asp115, Ser117, Thr119, and Glu124 each coordinate Ca(2+).

Homodimer. Interacts with GCA, RYR2 and ANXA7. In terms of tissue distribution, detected in cardiac myocytes.

The protein resides in the cytoplasm. It localises to the sarcoplasmic reticulum membrane. Calcium-binding protein that modulates excitation-contraction coupling in the heart. Contributes to calcium homeostasis in the heart sarcoplasmic reticulum. Modulates the activity of RYR2 calcium channels. This is Sorcin (SRI) from Homo sapiens (Human).